The primary structure comprises 620 residues: FAD-linked oxidoreductase notD (620 aa).

Positions M1–A21 are cleaved as a signal peptide. N-linked (GlcNAc...) asparagine glycans are attached at residues N50, N86, and N109. In terms of domain architecture, FAD-binding PCMH-type spans S124 to A313. N-linked (GlcNAc...) asparagine glycosylation is present at N403.

It belongs to the oxygen-dependent FAD-linked oxidoreductase family. Requires FAD as cofactor.

Its pathway is alkaloid biosynthesis. FAD-linked oxidoreductase; part of the gene cluster that mediates the biosynthesis of notoamide, a fungal indole alkaloid that belongs to a family of natural products containing a characteristic bicyclo[2.2.2]diazaoctane core. The first step of notoamide biosynthesis involves coupling of L-proline and L-tryptophan by the bimodular NRPS notE, to produce cyclo-L-tryptophan-L-proline called brevianamide F. The reverse prenyltransferase notF then acts as a deoxybrevianamide E synthase and converts brevianamide F to deoxybrevianamide E via reverse prenylation at C-2 of the indole ring leading to the bicyclo[2.2.2]diazaoctane core. Deoxybrevianamide E is further hydroxylated at C-6 of the indole ring, likely catalyzed by the cytochrome P450 monooxygenase notG, to yield 6-hydroxy-deoxybrevianamide E. 6-hydroxy-deoxybrevianamide E is a specific substrate of the prenyltransferase notC for normal prenylation at C-7 to produce 6-hydroxy-7-prenyl-deoxybrevianamide, also called notoamide S. As the proposed pivotal branching point in notoamide biosynthesis, notoamide S can be diverted to notoamide E through an oxidative pyran ring closure putatively catalyzed by either notH cytochrome P450 monooxygenase or the notD FAD-linked oxidoreductase. This step would be followed by an indole 2,3-epoxidation-initiated pinacol-like rearrangement catalyzed by the notB FAD-dependent monooxygenase leading to the formation of notoamide C and notoamide D. On the other hand notoamide S is converted to notoamide T by notH (or notD), a bifunctional oxidase that also functions as the intramolecular Diels-Alderase responsible for generation of (+)-notoamide T. To generate antipodal (-)-notoaminide T, notH' (or notD') in Aspergillus versicolor is expected to catalyze a Diels-Alder reaction leading to the opposite stereochemistry. The remaining oxidoreductase notD (or notH) likely catalyzes the oxidative pyran ring formation to yield (+)-stephacidin A. The FAD-dependent monooxygenase notI is highly similar to notB and is predicted to catalyze a similar conversion from (+)-stephacidin A to (-)-notoamide B via the 2,3-epoxidation of (+)-stephacidin A followed by a pinacol-type rearrangement. Finally, it remains unclear which enzyme could be responsible for the final hydroxylation steps leading to notoamide A and sclerotiamide. The protein is FAD-linked oxidoreductase notD of Aspergillus sp. (strain MF297-2).